Consider the following 155-residue polypeptide: Ribonuclease H (155 aa).

Positions 4 to 145 constitute an RNase H type-1 domain; the sequence is NISKVVIYTD…ADKLAAQGRQ (142 aa). Residues Asp13, Glu51, Asp73, and Asp137 each contribute to the Mg(2+) site.

Belongs to the RNase H family. Monomer. The cofactor is Mg(2+).

The protein localises to the cytoplasm. The enzyme catalyses Endonucleolytic cleavage to 5'-phosphomonoester.. Endonuclease that specifically degrades the RNA of RNA-DNA hybrids. In Rickettsia canadensis (strain McKiel), this protein is Ribonuclease H.